Consider the following 144-residue polypeptide: Phospholipase A2, membrane associated (144 aa).

An N-terminal signal peptide occupies residues M1–G20. Intrachain disulfides connect C46/C137, C48/C64, C63/C117, C69/C144, C70/C110, C79/C103, and C97/C108. Ca(2+) contacts are provided by Y47, G49, and S51. The active site involves H67. Residue D68 participates in Ca(2+) binding. Residue D111 is part of the active site.

This sequence belongs to the phospholipase A2 family. Ca(2+) is required as a cofactor.

The protein localises to the secreted. It is found in the cell membrane. It localises to the mitochondrion outer membrane. The catalysed reaction is a 1,2-diacyl-sn-glycero-3-phosphoethanolamine + H2O = a 1-acyl-sn-glycero-3-phosphoethanolamine + a fatty acid + H(+). It catalyses the reaction 1-hexadecanoyl-2-(9Z-octadecenoyl)-sn-glycero-3-phosphoethanolamine + H2O = 1-hexadecanoyl-sn-glycero-3-phosphoethanolamine + (9Z)-octadecenoate + H(+). It carries out the reaction 1-hexadecanoyl-2-(9Z,12Z-octadecadienoyl)-sn-glycero-3-phosphoethanolamine + H2O = 1-hexadecanoyl-sn-glycero-3-phosphoethanolamine + (9Z,12Z)-octadecadienoate + H(+). The enzyme catalyses 1-hexadecanoyl-2-(5Z,8Z,11Z,14Z-eicosatetraenoyl)-sn-glycero-3-phosphoethanolamine + H2O = 1-hexadecanoyl-sn-glycero-3-phosphoethanolamine + (5Z,8Z,11Z,14Z)-eicosatetraenoate + H(+). The catalysed reaction is N-hexadecanoyl-1,2-di-(9Z-octadecenoyl)-sn-glycero-3-phosphoethanolamine + H2O = N-hexadecanoyl-1-(9Z-octadecenoyl)-sn-glycero-3-phosphoethanolamine + (9Z)-octadecenoate + H(+). It catalyses the reaction 1,2-dihexadecanoyl-sn-glycero-3-phospho-(1'-sn-glycerol) + H2O = 1-hexadecanoyl-sn-glycero-3-phospho-(1'-sn-glycerol) + hexadecanoate + H(+). It carries out the reaction 1-hexadecanoyl-2-(9Z-octadecenoyl)-sn-glycero-3-phosphoglycerol + H2O = 1-hexadecanoyl-sn-glycero-3-phosphoglycerol + (9Z)-octadecenoate + H(+). The enzyme catalyses 1-hexadecanoyl-2-(9Z-octadecenoyl)-sn-glycero-3-phospho-(1'-sn-glycerol) + H2O = 1-hexadecanoyl-sn-glycero-3-phospho-(1'-sn-glycerol) + (9Z)-octadecenoate + H(+). The catalysed reaction is a 1,2-diacyl-sn-glycero-3-phosphocholine + H2O = a 1-acyl-sn-glycero-3-phosphocholine + a fatty acid + H(+). It catalyses the reaction 1,2-dihexadecanoyl-sn-glycero-3-phosphocholine + H2O = 1-hexadecanoyl-sn-glycero-3-phosphocholine + hexadecanoate + H(+). It carries out the reaction 1-hexadecanoyl-2-(9Z-octadecenoyl)-sn-glycero-3-phosphocholine + H2O = 1-hexadecanoyl-sn-glycero-3-phosphocholine + (9Z)-octadecenoate + H(+). The enzyme catalyses 1-hexadecanoyl-2-(9Z,12Z-octadecadienoyl)-sn-glycero-3-phosphocholine + H2O = (9Z,12Z)-octadecadienoate + 1-hexadecanoyl-sn-glycero-3-phosphocholine + H(+). The catalysed reaction is 1-hexadecanoyl-2-(4Z,7Z,10Z,13Z,16Z,19Z-docosahexaenoyl)-sn-glycero-3-phosphocholine + H2O = (4Z,7Z,10Z,13Z,16Z,19Z)-docosahexaenoate + 1-hexadecanoyl-sn-glycero-3-phosphocholine + H(+). Functionally, secretory calcium-dependent phospholipase A2 that primarily targets extracellular phospholipids with implications in host antimicrobial defense, inflammatory response and tissue regeneration. Hydrolyzes the ester bond of the fatty acyl group attached at sn-2 position of phospholipids (phospholipase A2 activity) with preference for phosphatidylethanolamines and phosphatidylglycerols over phosphatidylcholines. Contributes to lipid remodeling of cellular membranes and generation of lipid mediators involved in pathogen clearance. Displays bactericidal activity against Gram-positive bacteria by directly hydrolyzing phospholipids of the bacterial membrane. Upon sterile inflammation, targets membrane phospholipids of extracellular mitochondria released from activated platelets, generating free unsaturated fatty acids such as arachidonate that is used by neighboring leukocytes to synthesize inflammatory eicosanoids such as leukotrienes. Simultaneously, by compromising mitochondrial membrane integrity, promotes the release in circulation of potent damage-associated molecular pattern molecules that activate the innate immune response. Plays a stem cell regulator role in the intestinal crypt. Within intracellular compartment mediates Paneth cell differentiation and its stem cell supporting functions by inhibiting Wnt signaling pathway in intestinal stem cell (ICS). Secreted in the intestinal lumen upon inflammation, acts in an autocrine way and promotes prostaglandin E2 synthesis that stimulates Wnt signaling pathway in ICS cells and tissue regeneration. May play a role in the biosynthesis of N-acyl ethanolamines that regulate energy metabolism and inflammation. Hydrolyzes N-acyl phosphatidylethanolamines to N-acyl lysophosphatidylethanolamines, which are further cleaved by a lysophospholipase D to release N-acyl ethanolamines. Independent of its catalytic activity, acts as a ligand for integrins. Binds to and activates integrins ITGAV:ITGB3, ITGA4:ITGB1 and ITGA5:ITGB1. Binds to a site (site 2) which is distinct from the classical ligand-binding site (site 1) and induces integrin conformational changes and enhanced ligand binding to site 1. Induces cell proliferation in an integrin-dependent manner. This Bos taurus (Bovine) protein is Phospholipase A2, membrane associated (PLA2G2A).